The sequence spans 176 residues: Protein Dr1 (176 aa).

Position 2 is an N-acetylalanine (Ala-2). The Histone-fold domain maps to 12–75 (TIPRAAINKM…ISPEHVIQAL (64 aa)). Residues 100–103 (KRRK) carry the Nuclear localization signal motif. 4 positions are modified to phosphoserine: Ser-105, Ser-106, Ser-166, and Ser-167. The segment covering 152–167 (QLAAASASASNQAGSS) has biased composition (low complexity). Positions 152-176 (QLAAASASASNQAGSSQDEEDDDDI) are disordered.

It belongs to the NC2 beta/DR1 family. In terms of assembly, heterodimer with DRAP1. DR1 exists in solution as a homotetramer that dissociates during interaction with TBP and then, after complexing with TBP, reassociates at a slow rate, to reconstitute the tetramer. Interacts with NFIL3. Component of the ADA2A-containing complex (ATAC), composed of KAT14, KAT2A, TADA2L, TADA3L, ZZ3, MBIP, WDR5, YEATS2, CCDC101 and DR1. Post-translationally, phosphorylation regulates its interaction with TBP. Not phosphorylated when bound to DRAP1.

Its subcellular location is the nucleus. The association of the DR1/DRAP1 heterodimer with TBP results in a functional repression of both activated and basal transcription of class II genes. This interaction precludes the formation of a transcription-competent complex by inhibiting the association of TFIIA and/or TFIIB with TBP. Can bind to DNA on its own. Component of the ATAC complex, a complex with histone acetyltransferase activity on histones H3 and H4. The sequence is that of Protein Dr1 (DR1) from Homo sapiens (Human).